The chain runs to 480 residues: Bifunctional protein GlmU (480 aa).

The interval Met1–Pro247 is pyrophosphorylase. Residues Lys24, Gln86, Gly91–Thr92, Ser113–Asp115, Gly150, Glu172, and Asn245 contribute to the UDP-N-acetyl-alpha-D-glucosamine site. Asp115 contacts Mg(2+). Asn245 is a binding site for Mg(2+). The linker stretch occupies residues Val248–Gln268. Positions Gly269–Gly480 are N-acetyltransferase. Arg355 and Lys373 together coordinate UDP-N-acetyl-alpha-D-glucosamine. His385 functions as the Proton acceptor in the catalytic mechanism. The UDP-N-acetyl-alpha-D-glucosamine site is built by Tyr388 and Asn399. Residues Ala402, Asn408 to Tyr409, Ser427, Gly445, and Arg462 contribute to the acetyl-CoA site.

It in the N-terminal section; belongs to the N-acetylglucosamine-1-phosphate uridyltransferase family. In the C-terminal section; belongs to the transferase hexapeptide repeat family. In terms of assembly, homotrimer. Requires Mg(2+) as cofactor.

It localises to the cytoplasm. It catalyses the reaction alpha-D-glucosamine 1-phosphate + acetyl-CoA = N-acetyl-alpha-D-glucosamine 1-phosphate + CoA + H(+). The catalysed reaction is N-acetyl-alpha-D-glucosamine 1-phosphate + UTP + H(+) = UDP-N-acetyl-alpha-D-glucosamine + diphosphate. It functions in the pathway nucleotide-sugar biosynthesis; UDP-N-acetyl-alpha-D-glucosamine biosynthesis; N-acetyl-alpha-D-glucosamine 1-phosphate from alpha-D-glucosamine 6-phosphate (route II): step 2/2. It participates in nucleotide-sugar biosynthesis; UDP-N-acetyl-alpha-D-glucosamine biosynthesis; UDP-N-acetyl-alpha-D-glucosamine from N-acetyl-alpha-D-glucosamine 1-phosphate: step 1/1. The protein operates within bacterial outer membrane biogenesis; LPS lipid A biosynthesis. Catalyzes the last two sequential reactions in the de novo biosynthetic pathway for UDP-N-acetylglucosamine (UDP-GlcNAc). The C-terminal domain catalyzes the transfer of acetyl group from acetyl coenzyme A to glucosamine-1-phosphate (GlcN-1-P) to produce N-acetylglucosamine-1-phosphate (GlcNAc-1-P), which is converted into UDP-GlcNAc by the transfer of uridine 5-monophosphate (from uridine 5-triphosphate), a reaction catalyzed by the N-terminal domain. In Polaromonas sp. (strain JS666 / ATCC BAA-500), this protein is Bifunctional protein GlmU.